The primary structure comprises 168 residues: Regulatory protein RecX (168 aa).

The protein belongs to the RecX family.

It localises to the cytoplasm. Its function is as follows. Modulates RecA activity. The polypeptide is Regulatory protein RecX (Serratia proteamaculans (strain 568)).